Here is a 270-residue protein sequence, read N- to C-terminus: SAMP-activating enzyme E1 (270 aa).

Residues Gly42, Asp63, 70 to 74 (SNLQR), and Lys87 each bind ATP. A Glycyl lysine isopeptide (Lys-Gly) (interchain with G-Cter in SAMP2) cross-link involves residue Lys113. 131–132 (DN) lines the ATP pocket. Residues Cys171 and Cys174 each contribute to the Zn(2+) site. Residue Cys188 is the Glycyl thioester intermediate of the active site. Cys245 and Cys248 together coordinate Zn(2+).

It belongs to the HesA/MoeB/ThiF family. As to quaternary structure, interacts with NcsA. It depends on Zn(2+) as a cofactor. Post-translationally, sampylated at Lys-113 with the archaeal ubiquitin-like protein SAMP2. Also sampylated with SAMP1.

It carries out the reaction [small archaeal modifier protein]-C-terminal Gly-Gly + ATP + H(+) = [small archaeal modifier protein]-C-terminal Gly-Gly-AMP + diphosphate. Likely activates multiple ubiquitin-like SAMPs for protein conjugation as well as for sulfur transfer, via ATP-dependent adenylation at their C-terminus. In fact, it is required for the formation of all three SAMP1-, SAMP2- and SAMP3-protein conjugates, and for molybdenum cofactor (MoCo) biosynthesis and thiolation of tRNAs. In Haloferax volcanii (strain ATCC 29605 / DSM 3757 / JCM 8879 / NBRC 14742 / NCIMB 2012 / VKM B-1768 / DS2) (Halobacterium volcanii), this protein is SAMP-activating enzyme E1 (ubaA).